The primary structure comprises 208 residues: uncharacterized protein (208 aa).

6 helical membrane-spanning segments follow: residues 5–25, 41–61, 69–89, 123–143, 150–170, and 176–196; these read VIGI…KEAW, MLLI…IAAL, ANGI…LFFL, VLLG…ICGL, VFFF…TIAG, and NKLL…LVIY.

The protein resides in the cell membrane. This is an uncharacterized protein from Bacillus subtilis (strain 168).